We begin with the raw amino-acid sequence, 145 residues long: Large ribosomal subunit protein uL13 (145 aa).

This sequence belongs to the universal ribosomal protein uL13 family. In terms of assembly, part of the 50S ribosomal subunit.

This protein is one of the early assembly proteins of the 50S ribosomal subunit, although it is not seen to bind rRNA by itself. It is important during the early stages of 50S assembly. This is Large ribosomal subunit protein uL13 from Bacillus velezensis (strain DSM 23117 / BGSC 10A6 / LMG 26770 / FZB42) (Bacillus amyloliquefaciens subsp. plantarum).